The chain runs to 628 residues: Exonuclease V, mitochondrial (628 aa).

The transit peptide at Met-1–Met-21 directs the protein to the mitochondrion. A disordered region spans residues Thr-37–Asp-58. Residues Ser-38–Arg-52 are compositionally biased toward basic and acidic residues. Positions 164, 586, 589, and 595 each coordinate [4Fe-4S] cluster.

It belongs to the EXO5 family. Monomer. Mg(2+) serves as cofactor. [4Fe-4S] cluster is required as a cofactor.

It is found in the mitochondrion. In terms of biological role, single strand DNA specific 5' exonuclease involved in mitochondrial DNA replication and recombination. Releases dinucleotides as main products of catalysis. Has the capacity to slide across 5'double-stranded DNA or 5'RNA sequences and resumes cutting two nucleotides downstream of the double-stranded-to-single-stranded junction or RNA-to-DNA junction, respectively. In Candida albicans (strain SC5314 / ATCC MYA-2876) (Yeast), this protein is Exonuclease V, mitochondrial (DEM1).